A 414-amino-acid polypeptide reads, in one-letter code: Serine/threonine transporter SstT (414 aa).

Helical transmembrane passes span Gly22–Phe42, Ile54–Ala74, Ile89–Phe109, Ala148–Leu168, Ile189–Leu209, Leu223–Val243, Met305–Leu325, and Ile337–Ile357.

It belongs to the dicarboxylate/amino acid:cation symporter (DAACS) (TC 2.A.23) family.

Its subcellular location is the cell inner membrane. It carries out the reaction L-serine(in) + Na(+)(in) = L-serine(out) + Na(+)(out). It catalyses the reaction L-threonine(in) + Na(+)(in) = L-threonine(out) + Na(+)(out). In terms of biological role, involved in the import of serine and threonine into the cell, with the concomitant import of sodium (symport system). The sequence is that of Serine/threonine transporter SstT from Haemophilus influenzae (strain PittGG).